Reading from the N-terminus, the 607-residue chain is Pescadillo homolog (607 aa).

The tract at residues 301 to 341 (ANVVEQSEKTTEDADEEPETEENLDEFKPADGADNEDSKSL) is disordered. A compositionally biased stretch (acidic residues) spans 313-324 (DADEEPETEENL). The span at 325-339 (DEFKPADGADNEDSK) shows a compositional bias: basic and acidic residues. Positions 348–441 (SNTSLFSNFT…ILERTDLYAC (94 aa)) constitute a BRCT domain. Residues 497 to 604 (ENVEQIDDAE…RDIEKRKKLK (108 aa)) adopt a coiled-coil conformation. The disordered stretch occupies residues 531 to 607 (QNSKSAKKTK…EKRKKLKVEN (77 aa)). 2 stretches are compositionally biased toward basic and acidic residues: residues 544-561 (RDTL…KELS) and 595-607 (RDIE…KVEN).

The protein belongs to the pescadillo family. In terms of assembly, component of the NOP7 complex, composed of erb1/SPBC4F6.13c, ppp1/SPBC19F5.05c and ytm1/SPAC890.04c. Within the NOP7 complex erb1/SPBC4F6.13c appears to interact directly with ppp1/SPBC19F5.05c and ytm1/SPAC890.04c. The NOP7 complex also associates with the 66S pre-ribosome.

The protein resides in the nucleus. The protein localises to the nucleoplasm. It localises to the nucleolus. In terms of biological role, component of the NOP7 complex, which is required for maturation of the 25S and 5.8S ribosomal RNAs and formation of the 60S ribosome. In Schizosaccharomyces pombe (strain 972 / ATCC 24843) (Fission yeast), this protein is Pescadillo homolog (ppp1).